We begin with the raw amino-acid sequence, 256 residues long: 3-methyl-2-oxobutanoate hydroxymethyltransferase (256 aa).

Mg(2+) contacts are provided by Asp-42 and Asp-86. 3-methyl-2-oxobutanoate contacts are provided by residues 42–43, Asp-86, and Lys-116; that span reads DS. Residue Glu-118 coordinates Mg(2+). Residue Glu-185 is the Proton acceptor of the active site.

The protein belongs to the PanB family. Homodecamer; pentamer of dimers. The cofactor is Mg(2+).

Its subcellular location is the cytoplasm. The catalysed reaction is 3-methyl-2-oxobutanoate + (6R)-5,10-methylene-5,6,7,8-tetrahydrofolate + H2O = 2-dehydropantoate + (6S)-5,6,7,8-tetrahydrofolate. The protein operates within cofactor biosynthesis; (R)-pantothenate biosynthesis; (R)-pantoate from 3-methyl-2-oxobutanoate: step 1/2. In terms of biological role, catalyzes the reversible reaction in which hydroxymethyl group from 5,10-methylenetetrahydrofolate is transferred onto alpha-ketoisovalerate to form ketopantoate. The protein is 3-methyl-2-oxobutanoate hydroxymethyltransferase of Prochlorococcus marinus (strain SARG / CCMP1375 / SS120).